An 86-amino-acid polypeptide reads, in one-letter code: MKTLLLTLVVVTIVCLDLGYTLTCLICPEKYCQKVHTCRDGENLCVKRFYEGKRFGKKYPRGCAATCPEAKPHEIVECCSTDKCNK.

An N-terminal signal peptide occupies residues 1–21; sequence MKTLLLTLVVVTIVCLDLGYT. Intrachain disulfides connect cysteine 24/cysteine 45, cysteine 27/cysteine 32, cysteine 38/cysteine 63, cysteine 67/cysteine 78, and cysteine 79/cysteine 84.

As to expression, expressed by the venom gland.

It is found in the secreted. Functionally, binds with low affinity to muscular (alpha-1-beta-1-delta-epsilon/CHRNA1-CHRNB1-CHRND-CHRNE) and very low affinity to neuronal (alpha-7/CHRNA7) nicotinic acetylcholine receptor (nAChR). This chain is Neurotoxin 3FTx-LT, found in Bungarus fasciatus (Banded krait).